A 356-amino-acid chain; its full sequence is Histidinol-phosphate aminotransferase 2 (356 aa).

Lys-217 is subject to N6-(pyridoxal phosphate)lysine.

Belongs to the class-II pyridoxal-phosphate-dependent aminotransferase family. Histidinol-phosphate aminotransferase subfamily. In terms of assembly, homodimer. Requires pyridoxal 5'-phosphate as cofactor.

It catalyses the reaction L-histidinol phosphate + 2-oxoglutarate = 3-(imidazol-4-yl)-2-oxopropyl phosphate + L-glutamate. It participates in amino-acid biosynthesis; L-histidine biosynthesis; L-histidine from 5-phospho-alpha-D-ribose 1-diphosphate: step 7/9. This is Histidinol-phosphate aminotransferase 2 from Burkholderia pseudomallei (strain 1710b).